Consider the following 49-residue polypeptide: Large ribosomal subunit protein bL33A (49 aa).

Belongs to the bacterial ribosomal protein bL33 family.

In Staphylococcus haemolyticus (strain JCSC1435), this protein is Large ribosomal subunit protein bL33A.